Reading from the N-terminus, the 136-residue chain is Small ribosomal subunit protein eS6 (136 aa).

This sequence belongs to the eukaryotic ribosomal protein eS6 family.

This is Small ribosomal subunit protein eS6 from Methanosarcina mazei (strain ATCC BAA-159 / DSM 3647 / Goe1 / Go1 / JCM 11833 / OCM 88) (Methanosarcina frisia).